We begin with the raw amino-acid sequence, 156 residues long: Cyclin-dependent kinase inhibitor 2A (156 aa).

Methionine 1 bears the N-acetylmethionine mark. Serine 7 and serine 8 each carry phosphoserine. 4 ANK repeats span residues 11 to 40 (PSAD…LPNA), 44 to 72 (YGRR…EPNC), 77 to 106 (TLTR…RLDV), and 110 to 139 (WGRL…GTRG). 2 positions are modified to phosphoserine: serine 140 and serine 152.

Belongs to the CDKN2 cyclin-dependent kinase inhibitor family. In terms of assembly, heterodimer with CDK4 or CDK6. Predominant p16 complexes contained CDK6. Interacts with CDK4 (both 'T-172'-phosphorylated and non-phosphorylated forms); the interaction inhibits cyclin D-CDK4 kinase activity. Interacts with ISCO2. Post-translationally, phosphorylation seems to increase interaction with CDK4. Widely expressed but not detected in brain or skeletal muscle. Isoform 3 is pancreas-specific.

It localises to the cytoplasm. The protein resides in the nucleus. In terms of biological role, acts as a negative regulator of the proliferation of normal cells by interacting strongly with CDK4 and CDK6. This inhibits their ability to interact with cyclins D and to phosphorylate the retinoblastoma protein. This chain is Cyclin-dependent kinase inhibitor 2A, found in Homo sapiens (Human).